The primary structure comprises 365 residues: Flagellar P-ring protein (365 aa).

Positions 1–19 (MFKALAGIVLALVATLAHA) are cleaved as a signal peptide.

The protein belongs to the FlgI family. The basal body constitutes a major portion of the flagellar organelle and consists of four rings (L,P,S, and M) mounted on a central rod.

Its subcellular location is the periplasm. It localises to the bacterial flagellum basal body. Its function is as follows. Assembles around the rod to form the L-ring and probably protects the motor/basal body from shearing forces during rotation. This Salmonella heidelberg (strain SL476) protein is Flagellar P-ring protein.